The sequence spans 347 residues: MSLDQFLTRLDQLQSDADSAFTSASDAAALEEARVTFLGAKKGQLKDIQKMLGGIEKADKPAAGAKLNAVKSAINAAFEDAQQNLSGGDDSGADPTFDPTLPGTRPSLGHIHPITQTISHLTEIMGRMGFEVAEGPEVEDPWHNFVALNIPEDHPARDPLDNFYLATAKDPSGKSSVSAGDEGSQLLRSQTSTVQIRVMKQVEPPIRIISLGRVYRPDAPDATHFPMFHQMEGLLVDTNVTMANLKTVLRVFANNYLGEDVEIRFRPSFFPFTEPSVEVDFLWNGTWIEFGGAGMIDPNVFAAVGYDPEKVSGFAFGLGVERLCMRRHGITDIRDLYSGDLRFLKQF.

Residues 83–111 form a disordered region; the sequence is QNLSGGDDSGADPTFDPTLPGTRPSLGHI. Mg(2+) is bound at residue E274.

It belongs to the class-II aminoacyl-tRNA synthetase family. Phe-tRNA synthetase alpha subunit type 1 subfamily. As to quaternary structure, tetramer of two alpha and two beta subunits. Mg(2+) serves as cofactor.

It is found in the cytoplasm. The enzyme catalyses tRNA(Phe) + L-phenylalanine + ATP = L-phenylalanyl-tRNA(Phe) + AMP + diphosphate + H(+). The polypeptide is Phenylalanine--tRNA ligase alpha subunit (Rhodopirellula baltica (strain DSM 10527 / NCIMB 13988 / SH1)).